A 508-amino-acid chain; its full sequence is Adenosine deaminase (508 aa).

The signal sequence occupies residues 1–18; that stretch reads MFSQLVVWLLATSTVCLA.

The protein belongs to the metallo-dependent hydrolases superfamily. Adenosine and AMP deaminases family. ADGF subfamily. The cofactor is Zn(2+). Salivary gland (at protein level).

It is found in the secreted. The enzyme catalyses adenosine + H2O + H(+) = inosine + NH4(+). In terms of biological role, catalyzes the deamination of adenosine to inosine. This chain is Adenosine deaminase, found in Lutzomyia longipalpis (Sand fly).